The primary structure comprises 768 residues: MKKHFVVGETIKRFLRIGTSLALSISTLSLLPSAPRLSSAAGTIKIMPLGDSITYGMADEGGYRKYLSYFLQQKGYTNVDLVGPEGKDSASFNYNGQSVKYDDNHAGYSGYTITNLPGGWFGQLNGILETMQGGDYIKKYSPDIILLQIGTNDVSNGHLDGSEERLHKLLDYLRENMPSNGKVFLTTIPDLGNSGWGGNSNGDIAKYNELIKKVANDYSSKNVIYADIHSVIDASKDLADGVHPNAGGYEKMGKYWLEQIEGYLKASDGPQQTQPTQPSQGDSGPELIYGDLDGDKTITSFDAVIMRKGLINDFKDNNVKKAADIDQNGKAEVADLVQLQSFIIGKIKEFTVAEKTVTEKPVFEKSYNFPAVNQLKSSKDIPDPFIFMDGSKVESTDDWWKRQSEISCMYEYYMYGKWIDGSDDETTYSISGNSMTINVKRKSTGKTASFKAVINLPKNVRHEGGAPVILGMHKGISESTATSNGYAVITYDSDGMFSAPGTAQDNNQHKGAFYDLYPYGRNWDEQTGDLMAWSWGISRILDALYNGAAKELNINPDSSIVTGVSRYGKAASVCGAFDTRIKMCAPSCSGAGGLALYRYSSVGKTYDFSSKGGSSSYTYKENEPLGSLQASGEQGWFNGRFMEFRNAEQFPMDQHMLGALCCDPDRYLFIIGSCESEDWVNAPSVWMAYLGMKHVWDYVGISDHLAINIHKSGHAVIAEDIEKMVQYFDYHVYGIQPKMNLEELQTSVFALPKNKDSFADTFASKWLY.

The N-terminal stretch at 1-40 (MKKHFVVGETIKRFLRIGTSLALSISTLSLLPSAPRLSSA) is a signal peptide. The segment at 41–264 (AGTIKIMPLG…YWLEQIEGYL (224 aa)) is acetylxylan esterase. Ser-68 acts as the Nucleophile; for acetylxylan esterase activity in catalysis. Residues Asp-240 and His-243 each act as for acetylxylan esterase activity in the active site. Residues 267–283 (SDGPQQTQPTQPSQGDS) are compositionally biased toward low complexity. Residues 267 to 289 (SDGPQQTQPTQPSQGDSGPELIY) are disordered. The Dockerin domain maps to 285–352 (PELIYGDLDG…IIGKIKEFTV (68 aa)). Residues 353–768 (AEKTVTEKPV…ADTFASKWLY (416 aa)) form a glucuronoyl esterase region. Positions 563–568 (GVSRYG) match the GXSYXG catalytic site motif motif. Ser-565 acts as the Nucleophile; for glucuronoyl esterase activity in catalysis. Residues Lys-569, Glu-633, and Trp-679 each coordinate substrate.

It in the N-terminal section; belongs to the carbohydrate esterase 3 (CE3) family. The protein in the C-terminal section; belongs to the carbohydrate esterase 15 (CE15) family.

The protein resides in the secreted. The enzyme catalyses Deacetylation of xylans and xylo-oligosaccharides.. The catalysed reaction is a 4-O-methyl-alpha-D-glucuronosyl ester derivative + H2O = 4-O-methyl-alpha-D-glucuronate derivative + an alcohol + H(+). Its pathway is glycan degradation; xylan degradation. In terms of biological role, esterase involved in the degradation of plant cell wall polysaccharides. Catalyzes the deacetylation of chemically acetylated xylan and native, steam-extracted xylan. Seems to act in synergy with the xylanase XynD which produces xylo-oligosaccharides. Also catalyzes the deesterification of methyl esters of 4-O-methyl-D-glucuronic acid (MeGlcA) side residues in synthetic glucuronoxylan methyl ester, suggesting that it may be able to cleave ester linkages between MeGlcA carboxyl and more complex alcohols, including linkages between hemicellulose and lignin alcohols in plant cell walls. This chain is Multidomain esterase, found in Ruminococcus flavefaciens.